The following is a 267-amino-acid chain: Ras-related protein Rab-36 (267 aa).

Residues Val-68, Gly-69, Lys-70, Thr-71, Ser-72, Asp-83, Tyr-86, and Thr-89 each coordinate GTP. Thr-71 contributes to the Mg(2+) binding site. The short motif at 76-94 (RFCKNVFDRDYKATIGVDF) is the Switch 1 element. Thr-89 and Asp-112 together coordinate Mg(2+). The Switch 2 signature appears at 113 to 132 (TAGQEKFKCIASAYYRGAQV). Residues Gly-115, Lys-172, Asp-174, Ser-203, Ala-204, and Lys-205 each contribute to the GTP site. Positions 243-267 (GDLIQMEGSPPETQESKRPSSLGCC) are disordered. 2 S-geranylgeranyl cysteine lipidation sites follow: Cys-266 and Cys-267.

The protein belongs to the small GTPase superfamily. Rab family. Requires Mg(2+) as cofactor. As to expression, ubiquitously present in all tissues examined.

The protein resides in the golgi apparatus membrane. The catalysed reaction is GTP + H2O = GDP + phosphate + H(+). Its activity is regulated as follows. Regulated by guanine nucleotide exchange factors (GEFs) which promote the exchange of bound GDP for free GTP. Regulated by GTPase activating proteins (GAPs) which increase the GTP hydrolysis activity. Inhibited by GDP dissociation inhibitors (GDIs). Its function is as follows. The small GTPases Rab are key regulators of intracellular membrane trafficking, from the formation of transport vesicles to their fusion with membranes. Rabs cycle between an inactive GDP-bound form and an active GTP-bound form that is able to recruit to membranes different sets of downstream effectors directly responsible for vesicle formation, movement, tethering and fusion. The chain is Ras-related protein Rab-36 from Homo sapiens (Human).